A 57-amino-acid polypeptide reads, in one-letter code: Small hydrophobic protein (57 aa).

The Virion surface portion of the chain corresponds to 1-8 (MPAIQPPL). A helical transmembrane segment spans residues 9-29 (YLTFLLLILLYLIITLYVWTI). The Intravirion segment spans residues 30 to 57 (LTINHKTAVRYAALYQRSCSRWGFDQSL).

The protein belongs to the rubulavirus small hydrophobic protein family. In terms of assembly, interacts with host TNFRSF1A, RIPK1 and IRAK1; these interactions interfere with host NF-kappa-B activation at the level of receptor complexes. Interacts with host protein UBQLN4.

The protein resides in the virion membrane. The protein localises to the host cell membrane. In terms of biological role, plays a role in the inhibition of the host NF-kappa-B pathway. This inhibition occurs at the receptor level, by preventing the signaling of TNFR1 as well as IL-1R and TLR3. This Mumps virus (strain Enders) (MuV) protein is Small hydrophobic protein (SH).